Consider the following 183-residue polypeptide: Copper metallothionein 2 (183 aa).

Residues 1–35 are cys-rich copper-binding 1; sequence MAFNPNPEKTTSCCSTSKAQDKCTCPKGKCECETC. The tract at residues 36–45 is spacer B1; the sequence is PKSTKTPGSG. Positions 46-79 are cys-rich copper-binding 2; the sequence is PCNCGVKEKVSTCGCNGSGAACTCPPGQCACDSC. A spacer B2 region spans residues 80–88; sequence PRKAKSVST. Residues 89-110 are cys-rich copper-binding 3; sequence CGCGGSAAACSCPPGKCACDSC. The segment at 111 to 120 is spacer B3; that stretch reads PKQAQEKVSS. The segment at 121-142 is cys-rich copper-binding 4; the sequence is CACNGSGGACTCPPGKCSCSGC. The interval 143 to 156 is spacer B4; the sequence is PAQAKENPADQPTT. The tract at residues 157–183 is cys-rich copper-binding 5; the sequence is CGCQGVGVACTCPPGQCACDGCPAKAK.

The protein belongs to the metallothionein superfamily.

It localises to the cytoplasm. Its subcellular location is the cell cortex. Functionally, copper metallothionein that protects the cell against copper toxicity by tightly chelating copper ions. Required for antioxidant-mediated growth rescue in the presence of fluconazole. Acts as a critical factors for lung colonization and virulence. The polypeptide is Copper metallothionein 2 (Cryptococcus neoformans var. grubii serotype A (strain H99 / ATCC 208821 / CBS 10515 / FGSC 9487) (Filobasidiella neoformans var. grubii)).